The primary structure comprises 377 residues: MASVNWADDRAARKKFPPPSFYMPLLVSSDKAPYRVIPRNLVPIGKGNKDEQIGYWNVQERWRMRRGQRVDLPPKVHFYYLGTGPHKDLKFRQRSDGVVWVAKEGAKTVNTSLGNRKRNQKPLEPKFSIALPPELSVVEFEDRSNNSSRASSRSSTRNNSRDSSRSTSRQQSRTRSDSNQSSSDLVAAVTLALKNLGFDNQSKSPSSSGTSTPKKPNKPLSQPRADKPSQLKKPRWKRVPTREENVIQCFGPRDFNHNMGDSDLVQNGVDAKGFPQLAELIPNQAALFFDSEVSTDEVGDNVQITYTYKMLVAKDNKNLPKFIEQISAFTKPSSIKEMQSQSSHVAQNTVLNASIPESKPLADDDSAIIEIVNEVLH.

In terms of domain architecture, CoV N NTD spans 17-139; that stretch reads PPPSFYMPLL…ALPPELSVVE (123 aa). Positions 19–151 are RNA-binding; that stretch reads PSFYMPLLVS…DRSNNSSRAS (133 aa). Disordered regions lie at residues 140 to 183 and 196 to 244; these read FEDR…QSSS and LGFD…TREE. Composition is skewed to low complexity over residues 145–158, 165–183, and 202–214; these read NNSS…STRN, RSTS…QSSS, and SKSP…STPK. Position 148 is a phosphoserine; by host (Ser-148). A CoV N CTD domain is found at 223-337; sequence PRADKPSQLK…AFTKPSSIKE (115 aa). Residues 230–239 show a composition bias toward basic residues; the sequence is QLKKPRWKRV. The interval 230 to 334 is dimerization; the sequence is QLKKPRWKRV…QISAFTKPSS (105 aa).

The protein belongs to the alphacoronavirus nucleocapsid protein family. In terms of assembly, homooligomer. Both monomeric and oligomeric forms interact with RNA. Interacts with protein M. Interacts with NSP3; this interaction serves to tether the genome to the newly translated replicase-transcriptase complex at a very early stage of infection. ADP-ribosylated. The ADP-ribosylation is retained in the virion during infection. Post-translationally, phosphorylated on serine and threonine residues.

It localises to the virion. Its subcellular location is the host endoplasmic reticulum-Golgi intermediate compartment. The protein localises to the host Golgi apparatus. In terms of biological role, packages the positive strand viral genome RNA into a helical ribonucleocapsid (RNP) and plays a fundamental role during virion assembly through its interactions with the viral genome and membrane protein M. Plays an important role in enhancing the efficiency of subgenomic viral RNA transcription as well as viral replication. In Human coronavirus NL63 (HCoV-NL63), this protein is Nucleoprotein.